A 465-amino-acid chain; its full sequence is Hexokinase-4 (465 aa).

The region spanning 10-454 is the Hexokinase domain; that stretch reads ATKKEKVEQI…SGRGAALVSA (445 aa). Residues 67-203 are hexokinase small subdomain; the sequence is EGSEVGDFLS…DFEMDVVAMV (137 aa). 78–83 serves as a coordination point for ATP; it reads DLGGTN. Residues 151–152, 168–169, and 204–205 contribute to the substrate site; these read SF, TK, and ND. Residues 204 to 443 form a hexokinase large subdomain region; sequence NDTVATMISC…CEITFIESEE (240 aa). Thr-228 is a binding site for ATP. The substrate site is built by Asn-231, Glu-256, and Glu-290. ATP is bound by residues 295-296, 332-336, and 411-415; these read GK, TRFVS, and SVYKL.

This sequence belongs to the hexokinase family. Monomer. Interacts with MIDN; the interaction occurs preferentially at low glucose levels and results in inhibition of hexokinase activity. Interacts with GCKR; leading to sequestration in the nucleus. In terms of tissue distribution, expression is restricted to the liver and pancreatic islets (at protein level).

The protein localises to the cytoplasm. It is found in the nucleus. It localises to the mitochondrion. The enzyme catalyses a D-hexose + ATP = a D-hexose 6-phosphate + ADP + H(+). It catalyses the reaction D-fructose + ATP = D-fructose 6-phosphate + ADP + H(+). It carries out the reaction D-glucose + ATP = D-glucose 6-phosphate + ADP + H(+). The catalysed reaction is D-mannose + ATP = D-mannose 6-phosphate + ADP + H(+). It functions in the pathway carbohydrate metabolism; hexose metabolism. Its pathway is carbohydrate degradation; glycolysis; D-glyceraldehyde 3-phosphate and glycerone phosphate from D-glucose: step 1/4. With respect to regulation, subject to allosteric regulation. Low glucose and high fructose-6-phosphate triggers association with the inhibitor GCKR followed by sequestration in the nucleus. Its function is as follows. Catalyzes the phosphorylation of hexose, such as D-glucose, D-fructose and D-mannose, to hexose 6-phosphate (D-glucose 6-phosphate, D-fructose 6-phosphate and D-mannose 6-phosphate, respectively). Compared to other hexokinases, has a weak affinity for D-glucose, and is effective only when glucose is abundant. Mainly expressed in pancreatic beta cells and the liver and constitutes a rate-limiting step in glucose metabolism in these tissues. Since insulin secretion parallels glucose metabolism and the low glucose affinity of GCK ensures that it can change its enzymatic activity within the physiological range of glucose concentrations, GCK acts as a glucose sensor in the pancreatic beta cell. In pancreas, plays an important role in modulating insulin secretion. In liver, helps to facilitate the uptake and conversion of glucose by acting as an insulin-sensitive determinant of hepatic glucose usage. Required to provide D-glucose 6-phosphate for the synthesis of glycogen. Mediates the initial step of glycolysis by catalyzing phosphorylation of D-glucose to D-glucose 6-phosphate. The sequence is that of Hexokinase-4 from Rattus norvegicus (Rat).